The sequence spans 555 residues: 2-isopropylmalate synthase (555 aa).

In terms of domain architecture, Pyruvate carboxyltransferase spans 30–303 (PIWCSVDLRD…DPGLDCTDIN (274 aa)). Mg(2+)-binding residues include D39, H242, H244, and N278. The segment at 437–555 (QPDARIKFVD…VSAANRVIAK (119 aa)) is regulatory domain.

It belongs to the alpha-IPM synthase/homocitrate synthase family. LeuA type 2 subfamily. Homodimer. Mg(2+) serves as cofactor.

The protein resides in the cytoplasm. The catalysed reaction is 3-methyl-2-oxobutanoate + acetyl-CoA + H2O = (2S)-2-isopropylmalate + CoA + H(+). It participates in amino-acid biosynthesis; L-leucine biosynthesis; L-leucine from 3-methyl-2-oxobutanoate: step 1/4. Functionally, catalyzes the condensation of the acetyl group of acetyl-CoA with 3-methyl-2-oxobutanoate (2-ketoisovalerate) to form 3-carboxy-3-hydroxy-4-methylpentanoate (2-isopropylmalate). This Brucella melitensis biotype 1 (strain ATCC 23456 / CCUG 17765 / NCTC 10094 / 16M) protein is 2-isopropylmalate synthase.